The following is a 32-amino-acid chain: Trypsin inhibitor 4 (32 aa).

3 disulfide bridges follow: Cys-6–Cys-23, Cys-13–Cys-25, and Cys-19–Cys-31.

Belongs to the protease inhibitor I7 (squash-type serine protease inhibitor) family.

It is found in the secreted. Its function is as follows. Inhibits trypsin. The chain is Trypsin inhibitor 4 from Cucurbita maxima (Pumpkin).